The primary structure comprises 885 residues: High affinity cAMP-specific and IBMX-insensitive 3',5'-cyclic phosphodiesterase 8B (885 aa).

Disordered stretches follow at residues 18-41 (RDSD…APLP) and 72-95 (TELG…GRRR). Positions 23-34 (SSSPRQTTSVSQ) are enriched in polar residues. Positions 75-90 (GSGSSAGSAAPAATTS) are enriched in low complexity. A PAS domain is found at 267-338 (ACNSVFTALD…DTINTCIKKG (72 aa)). The segment at 393 to 436 (IHRDSGDNSQTEPHSFRYKNRRKESIDVKSISSRGSDAPSLQNR) is disordered. The segment covering 422–436 (SISSRGSDAPSLQNR) has biased composition (polar residues). Ser-517 carries the phosphoserine modification. A PDEase domain is found at 539–875 (TINDVPPCIS…KHWKTLDDLK (337 aa)). The Proton donor role is filled by His-615. The a divalent metal cation site is built by His-619, His-655, and Asp-656. Ser-754 carries the post-translational modification Phosphoserine. Position 781 (Asp-781) interacts with a divalent metal cation.

It belongs to the cyclic nucleotide phosphodiesterase family. PDE8 subfamily. It depends on a divalent metal cation as a cofactor. As to expression, abundantly expressed in the thyroid. Also very weakly expressed in brain, spinal cord and placenta. In the thyroid isoform 1 predominates, and isoforms 2 and 6 are also highly expressed. In the placenta isoforms 1 and 2 are expressed equally. In the brain isoform 2 predominates.

The enzyme catalyses 3',5'-cyclic AMP + H2O = AMP + H(+). It participates in purine metabolism; 3',5'-cyclic AMP degradation; AMP from 3',5'-cyclic AMP: step 1/1. With respect to regulation, inhibited by dipyridimole. Insensitive to selective PDE inhibitors including rolipram and milrinone as well as to the non-selective inhibitor, IBMX. Unaffected by cGMP. In terms of biological role, hydrolyzes the second messenger cAMP, which is a key regulator of many important physiological processes. May be involved in specific signaling in the thyroid gland. The polypeptide is High affinity cAMP-specific and IBMX-insensitive 3',5'-cyclic phosphodiesterase 8B (PDE8B) (Homo sapiens (Human)).